We begin with the raw amino-acid sequence, 596 residues long: NADH-quinone oxidoreductase subunit C/D (596 aa).

An NADH dehydrogenase I subunit C region spans residues 1-186; the sequence is MTDLTAQDAA…DPFELTKAKQ (186 aa). The tract at residues 210–596 is NADH dehydrogenase I subunit D; sequence DFMFLNLGPN…IDFVMSDVDR (387 aa).

This sequence in the N-terminal section; belongs to the complex I 30 kDa subunit family. The protein in the C-terminal section; belongs to the complex I 49 kDa subunit family. In terms of assembly, NDH-1 is composed of 13 different subunits. Subunits NuoB, CD, E, F, and G constitute the peripheral sector of the complex.

The protein localises to the cell inner membrane. The enzyme catalyses a quinone + NADH + 5 H(+)(in) = a quinol + NAD(+) + 4 H(+)(out). In terms of biological role, NDH-1 shuttles electrons from NADH, via FMN and iron-sulfur (Fe-S) centers, to quinones in the respiratory chain. The immediate electron acceptor for the enzyme in this species is believed to be ubiquinone. Couples the redox reaction to proton translocation (for every two electrons transferred, four hydrogen ions are translocated across the cytoplasmic membrane), and thus conserves the redox energy in a proton gradient. In Salmonella choleraesuis (strain SC-B67), this protein is NADH-quinone oxidoreductase subunit C/D.